Reading from the N-terminus, the 533-residue chain is MKEPRIFPRERPTPWTRAPLPPRGRLDGGPVMNAGHPMGVNSDPFLMAAGSLGGNLAPFPRNAAPFQNPSGSLASNPAHFAAGARDPGMTSFPRGMNPTGTGAVSFPRPGGLLGPGPGPGLNPRTGALPGPGPMSNPRLGGLPGPGPMANPRAGGLLGASPDPRSGGPMVPGCGPNMRAGVLSSGTGPPNPRPVGLGPGPSPNLRSSFLGTNPAPRSGMFPGPGLGPNPRACGLGPGLGPNPRAGGLGPGPNLDNRAGGLLGTGSGLNLRMAGPQGLDLAPILRAAGLLGTNSVSFSQASGNMGTNPPTMTRVPGPIGPNTGPSSRGLGLPGPNPSPMSRAPGPMGPNSAHFSRPGGPMGVNAGVFPRGTGSGGLNPNAFSQSSGTLASNPGTFQRSAGLQGSNQAVFPRASGPLGPNPANFPRATGLQGPSPAAFPRSAGPLGPGQVAFPRSAAGHLGSSPAGPVGINPAPFARPTGTLGLNPASFPRMNGPVGKTLVPFPRVGSLPGSNPAAFPRPGGPMAAMYPNGMLPP.

Residues 1–12 show a composition bias toward basic and acidic residues; that stretch reads MKEPRIFPRERP. 4 disordered regions span residues 1–31, 67–164, 177–259, and 299–350; these read MKEP…GGPV, QNPS…PDPR, MRAG…RAGG, and ASGN…PNSA. Position 160 is a phosphoserine (Ser160). Polar residues predominate over residues 299–309; it reads ASGNMGTNPPT. Arg368 carries the post-translational modification Asymmetric dimethylarginine. The residue at position 396 (Arg396) is an Omega-N-methylarginine. Ser432 is modified (phosphoserine).

It belongs to the DERPC family.

It localises to the nucleus. Potential tumor suppressor. This Mus musculus (Mouse) protein is Decreased expression in renal and prostate cancer protein.